The chain runs to 940 residues: Translation initiation factor IF-2 (940 aa).

Disordered stretches follow at residues 116 to 137 (PEQE…SSDT), 151 to 196 (EVEA…EQRS), 210 to 294 (AVRK…VKKV), and 318 to 346 (HSAP…VANR). Residues 121-137 (LESTSVAEIPESVSSDT) show a composition bias toward polar residues. The segment covering 159–180 (PEPEVEATPEPEVEDVVAEEAE) has biased composition (acidic residues). The segment covering 181–193 (PAAAEPAPAPVVE) has biased composition (low complexity). The segment covering 213–239 (KKAEEEAEVARRKADAEKAEAAAKQKA) has biased composition (basic and acidic residues). Residues 282–294 (KHNKKAGKAVKKV) are compositionally biased toward basic residues. Low complexity predominate over residues 326–337 (GGQNNNSSNSGS). The 170-residue stretch at 441 to 610 (ARAPVVTVMG…ALQAELLELS (170 aa)) folds into the tr-type G domain. The tract at residues 450 to 457 (GHVDHGKT) is G1. 450–457 (GHVDHGKT) serves as a coordination point for GTP. Positions 475-479 (GITQH) are G2. Residues 496–499 (DTPG) form a G3 region. Residues 496–500 (DTPGH) and 550–553 (NKID) contribute to the GTP site. Positions 550 to 553 (NKID) are G4. Residues 586 to 588 (SAQ) are G5.

This sequence belongs to the TRAFAC class translation factor GTPase superfamily. Classic translation factor GTPase family. IF-2 subfamily.

Its subcellular location is the cytoplasm. Functionally, one of the essential components for the initiation of protein synthesis. Protects formylmethionyl-tRNA from spontaneous hydrolysis and promotes its binding to the 30S ribosomal subunits. Also involved in the hydrolysis of GTP during the formation of the 70S ribosomal complex. This Teredinibacter turnerae (strain ATCC 39867 / T7901) protein is Translation initiation factor IF-2.